Here is a 663-residue protein sequence, read N- to C-terminus: UvrABC system protein B (663 aa).

Residues 26 to 183 form the Helicase ATP-binding domain; the sequence is DGLESGLAKQ…KRLAEMQYTR (158 aa). 39–46 contacts ATP; that stretch reads GVTGSGKT. A Beta-hairpin motif is present at residues 92-115; it reads YYDYYQPEAYVPASDTFIEKDASI. The 167-residue stretch at 430–596 folds into the Helicase C-terminal domain; it reads QVDDLMSEIR…GINKSVEDIL (167 aa). Residues 624-659 form the UVR domain; sequence AKQINALEKQMYAHAQNMEFELAAKIRDEYLLLKEQ.

This sequence belongs to the UvrB family. In terms of assembly, forms a heterotetramer with UvrA during the search for lesions. Interacts with UvrC in an incision complex.

The protein resides in the cytoplasm. The UvrABC repair system catalyzes the recognition and processing of DNA lesions. A damage recognition complex composed of 2 UvrA and 2 UvrB subunits scans DNA for abnormalities. Upon binding of the UvrA(2)B(2) complex to a putative damaged site, the DNA wraps around one UvrB monomer. DNA wrap is dependent on ATP binding by UvrB and probably causes local melting of the DNA helix, facilitating insertion of UvrB beta-hairpin between the DNA strands. Then UvrB probes one DNA strand for the presence of a lesion. If a lesion is found the UvrA subunits dissociate and the UvrB-DNA preincision complex is formed. This complex is subsequently bound by UvrC and the second UvrB is released. If no lesion is found, the DNA wraps around the other UvrB subunit that will check the other stand for damage. In Legionella pneumophila (strain Corby), this protein is UvrABC system protein B.